Consider the following 211-residue polypeptide: Glycerol-3-phosphate acyltransferase (211 aa).

Transmembrane regions (helical) follow at residues 10–30, 63–83, 90–110, 126–146, 152–172, and 174–194; these read FYTWSIFLMSYLIGSIPFGLL, TLTLLCDILKGTVVVLVIKFL, SIIISLVGFFAFLGHLFPIWL, LGYYWPAAIVFIIVWIMFFIL, LSALIAVIITPIFVYFSYPHL, and AHCILVMMSIFVIIKHHANIA.

This sequence belongs to the PlsY family. In terms of assembly, probably interacts with PlsX.

It is found in the cell inner membrane. The catalysed reaction is an acyl phosphate + sn-glycerol 3-phosphate = a 1-acyl-sn-glycero-3-phosphate + phosphate. It participates in lipid metabolism; phospholipid metabolism. Functionally, catalyzes the transfer of an acyl group from acyl-phosphate (acyl-PO(4)) to glycerol-3-phosphate (G3P) to form lysophosphatidic acid (LPA). This enzyme utilizes acyl-phosphate as fatty acyl donor, but not acyl-CoA or acyl-ACP. The chain is Glycerol-3-phosphate acyltransferase from Bartonella quintana (strain Toulouse) (Rochalimaea quintana).